A 360-amino-acid chain; its full sequence is Phospho-N-acetylmuramoyl-pentapeptide-transferase (360 aa).

A run of 10 helical transmembrane segments spans residues alanine 26–lysine 46, threonine 73–leucine 93, tyrosine 97–tyrosine 117, alanine 135–valine 155, isoleucine 168–serine 188, glycine 199–serine 219, alanine 236–phenylalanine 256, valine 263–leucine 283, isoleucine 288–valine 308, and valine 338–lysine 358.

This sequence belongs to the glycosyltransferase 4 family. MraY subfamily. Mg(2+) serves as cofactor.

Its subcellular location is the cell inner membrane. The catalysed reaction is UDP-N-acetyl-alpha-D-muramoyl-L-alanyl-gamma-D-glutamyl-meso-2,6-diaminopimeloyl-D-alanyl-D-alanine + di-trans,octa-cis-undecaprenyl phosphate = di-trans,octa-cis-undecaprenyl diphospho-N-acetyl-alpha-D-muramoyl-L-alanyl-D-glutamyl-meso-2,6-diaminopimeloyl-D-alanyl-D-alanine + UMP. It participates in cell wall biogenesis; peptidoglycan biosynthesis. In terms of biological role, catalyzes the initial step of the lipid cycle reactions in the biosynthesis of the cell wall peptidoglycan: transfers peptidoglycan precursor phospho-MurNAc-pentapeptide from UDP-MurNAc-pentapeptide onto the lipid carrier undecaprenyl phosphate, yielding undecaprenyl-pyrophosphoryl-MurNAc-pentapeptide, known as lipid I. This is Phospho-N-acetylmuramoyl-pentapeptide-transferase from Shewanella frigidimarina (strain NCIMB 400).